We begin with the raw amino-acid sequence, 782 residues long: Endonuclease MutS2 (782 aa).

336–343 (GPNTGGKT) contacts ATP. The region spanning 707–782 (LDLRGYRYED…GFGVTVATLK (76 aa)) is the Smr domain.

Belongs to the DNA mismatch repair MutS family. MutS2 subfamily. Homodimer. Binds to stalled ribosomes, contacting rRNA.

Its function is as follows. Endonuclease that is involved in the suppression of homologous recombination and thus may have a key role in the control of bacterial genetic diversity. Acts as a ribosome collision sensor, splitting the ribosome into its 2 subunits. Detects stalled/collided 70S ribosomes which it binds and splits by an ATP-hydrolysis driven conformational change. Acts upstream of the ribosome quality control system (RQC), a ribosome-associated complex that mediates the extraction of incompletely synthesized nascent chains from stalled ribosomes and their subsequent degradation. Probably generates substrates for RQC. The polypeptide is Endonuclease MutS2 (Staphylococcus aureus (strain MRSA252)).